A 341-amino-acid polypeptide reads, in one-letter code: Glyceraldehyde-3-phosphate dehydrogenase 4 (341 aa).

NAD(+)-binding positions include 13 to 14, D35, and K85; that span reads RI. D-glyceraldehyde 3-phosphate is bound by residues 157–159, T188, 217–218, and R240; these read SCT and TG. C158 (nucleophile) is an active-site residue. An NAD(+)-binding site is contributed by N322.

Belongs to the glyceraldehyde-3-phosphate dehydrogenase family. In terms of assembly, homotetramer.

The protein resides in the cytoplasm. The enzyme catalyses D-glyceraldehyde 3-phosphate + phosphate + NAD(+) = (2R)-3-phospho-glyceroyl phosphate + NADH + H(+). It participates in carbohydrate degradation; glycolysis; pyruvate from D-glyceraldehyde 3-phosphate: step 1/5. This is Glyceraldehyde-3-phosphate dehydrogenase 4 (gpd-4) from Caenorhabditis elegans.